The primary structure comprises 234 residues: Sugar fermentation stimulation protein A (234 aa).

The H-T-H motif DNA-binding region spans L201–S220.

Belongs to the SfsA family.

Functionally, binds to DNA non-specifically. Could be a regulatory factor involved in maltose metabolism. This is Sugar fermentation stimulation protein A from Escherichia coli O7:K1 (strain IAI39 / ExPEC).